The primary structure comprises 465 residues: MRYTDGKVHDITIAYIGGGSRGWAWNLMTDLAKEESISGTVKLYDIDYDAAHDNEIIGNALSMRQDVKGKWLYKACETLEESLKGADFVIISILPGTFDEMESDVHAPEKYGIYQSVGDTVGPGGIVRALRTIPMFVDIANAIKEHCPDAWVINYTNPMTLCVRTLYEIFPQIKAFGCCHEVFGTQKLLSRALQDIEGIENVPREEIKINVLGINHFTWIDNARYKDIDLMYVYKQFVNKYYESGFVSDANNNWMNNSFVSAERVKFDLFLRYGVIAAAGDRHLAEFVPGYWYLKDPETVREWMFGLTTVSWRKEDLKRRLERSKRLKTGEEKFELKETGEEGVRQIKALLGLGDLVTNVNMPNHGQIEGIPYGAVVETNALFSGNKLKPVLSGKLPDNVNSLVLRQVYNQETTLKAALKRDFDLAFSAFVNDPLVTISLKDAKKLFKEMLENTKKYLDGWKIKA.

Ile11–Thr78 is a binding site for NAD(+). Asn157 contributes to the substrate binding site. Cys179 is a Mn(2+) binding site. The Proton donor role is filled by His180. His216 contacts Mn(2+).

This sequence belongs to the glycosyl hydrolase 4 family. In terms of assembly, homotetramer. Requires NAD(+) as cofactor. Mn(2+) serves as cofactor.

The catalysed reaction is [(1-&gt;4)-alpha-D-galacturonosyl](n) + H2O = alpha-D-galacturonate + [(1-&gt;4)-alpha-D-galacturonosyl](n-1). Alpha-galacturonidase able to catalyze the hydrolysis of the chromogenic substrate p-nitrophenyl-alpha-D-galacturonic acid (pNPalphaGalUA). It is probable that alpha-1,4-di-galacturonate (GalUA(2)) is the naturally occurring substrate. In Thermoanaerobacterium saccharolyticum (strain DSM 8691 / JW/SL-YS485), this protein is Alpha-galacturonidase.